The sequence spans 332 residues: Agamous-like MADS-box protein AGL66 (332 aa).

The 61-residue stretch at M1–T61 folds into the MADS-box domain. Positions T120–E151 form a coiled coil.

Forms a heterodimer with AGL30. Expressed in pollen.

Its subcellular location is the nucleus. Functionally, probable transcription factor that forms a heterodimer with the MADS-box protein AGL30 and is involved in the regulation of pollen maturation at the late stages of pollen development and pollen tube growth. The polypeptide is Agamous-like MADS-box protein AGL66 (Arabidopsis thaliana (Mouse-ear cress)).